Consider the following 511-residue polypeptide: MASDSSFPGASSNVAEYSVSEISGALKRTVEDTFGHVRVRGEISGYRGPHSSGHAYFALKDDRARLEAVIWRGSMSRLRFRPEEGMEVIATGKLTTYPGSSKYQIVIEQMEPAGAGALMALLEERKQRLAAEGLFDPALKQLLPFMPRVIGVVTSPTGAVIRDIIHRISDRYPLRVIVWPVRVQGDTCGPEVATAVNGFNTLPDDGPIPRPDVLIVARGGGSLEDLWGFNDEIVVRAVAASHIPVISAVGHETDWTLIDLAADMRAPTPTGAAEMAVPVKADLQASLASQSARLSSAMSRFFDQKRQAHRAAARAMPSADQLLALPRRRFDEAASRLTRALFVNTQKKRVHFDGHARQLSPRLLQRRLVELERGVTMLGQRLPRALEAFLRERRTAFTHRANRLSPEPILRRTRLTGSTLEQLDRRRDQAVRLLIERVKRRSQELDRLMRTLSYESVLERGFAVVFDAQGKPVKQAAAVSPGDALSVRFRDGDVGVVARAGLTIPDPTKGQ.

The protein belongs to the XseA family. In terms of assembly, heterooligomer composed of large and small subunits.

It localises to the cytoplasm. The catalysed reaction is Exonucleolytic cleavage in either 5'- to 3'- or 3'- to 5'-direction to yield nucleoside 5'-phosphates.. Functionally, bidirectionally degrades single-stranded DNA into large acid-insoluble oligonucleotides, which are then degraded further into small acid-soluble oligonucleotides. The polypeptide is Exodeoxyribonuclease 7 large subunit (Brucella melitensis biotype 1 (strain ATCC 23456 / CCUG 17765 / NCTC 10094 / 16M)).